Reading from the N-terminus, the 542-residue chain is Chaperonin GroEL (542 aa).

Residues 29-32 (TLGP), 86-90 (DGTTT), G413, 477-479 (NAA), and D493 each bind ATP.

Belongs to the chaperonin (HSP60) family. In terms of assembly, forms a cylinder of 14 subunits composed of two heptameric rings stacked back-to-back. Interacts with the co-chaperonin GroES.

Its subcellular location is the cytoplasm. The catalysed reaction is ATP + H2O + a folded polypeptide = ADP + phosphate + an unfolded polypeptide.. Together with its co-chaperonin GroES, plays an essential role in assisting protein folding. The GroEL-GroES system forms a nano-cage that allows encapsulation of the non-native substrate proteins and provides a physical environment optimized to promote and accelerate protein folding. In Heliobacterium modesticaldum (strain ATCC 51547 / Ice1), this protein is Chaperonin GroEL.